Consider the following 937-residue polypeptide: FNIP repeat-containing protein DDB_G0271996 (937 aa).

A compositionally biased stretch (polar residues) spans 1 to 12 (MQQPISIQQPVV). The tract at residues 1–60 (MQQPISIQQPVVNNINNSPNNQANINNNTTNNTNNNNNNNNTTNNIANNNNSNNINNNNE) is disordered. The span at 13–60 (NNINNSPNNQANINNNTTNNTNNNNNNNNTTNNIANNNNSNNINNNNE) shows a compositional bias: low complexity. FNIP repeat units lie at residues 307 to 350 (FNQP…LGQR), 354 to 394 (PIPI…TLDN), 396 to 439 (FNQP…FHQN), and 598 to 640 (YNHQ…RVKS). Residues 677 to 769 (VEQQAQYAQQ…EEEDTNNHQH (93 aa)) adopt a coiled-coil conformation. Residues 719-729 (KQQQQQQQDNE) show a composition bias toward low complexity. Disordered regions lie at residues 719–767 (KQQQ…TNNH), 794–823 (SNNS…EEED), and 910–937 (QNQN…NVKK). Residues 751 to 763 (LEEEQENEEEEED) show a composition bias toward acidic residues. 2 stretches are compositionally biased toward low complexity: residues 794 to 814 (SNNS…NNNS) and 910 to 929 (QNQN…NNNN). Positions 902–937 (ICNNINQNQNQNNNNYNNNNNNNNNNNNNKKKNVKK) form a coiled coil.

This Dictyostelium discoideum (Social amoeba) protein is FNIP repeat-containing protein DDB_G0271996.